The following is a 515-amino-acid chain: ATP synthase subunit alpha (515 aa).

171–178 (GDRQTGKT) provides a ligand contact to ATP.

The protein belongs to the ATPase alpha/beta chains family. F-type ATPases have 2 components, CF(1) - the catalytic core - and CF(0) - the membrane proton channel. CF(1) has five subunits: alpha(3), beta(3), gamma(1), delta(1), epsilon(1). CF(0) has three main subunits: a(1), b(2) and c(9-12). The alpha and beta chains form an alternating ring which encloses part of the gamma chain. CF(1) is attached to CF(0) by a central stalk formed by the gamma and epsilon chains, while a peripheral stalk is formed by the delta and b chains.

It localises to the cell inner membrane. The catalysed reaction is ATP + H2O + 4 H(+)(in) = ADP + phosphate + 5 H(+)(out). Produces ATP from ADP in the presence of a proton gradient across the membrane. The alpha chain is a regulatory subunit. This is ATP synthase subunit alpha from Xylella fastidiosa (strain M12).